The chain runs to 338 residues: Glyceraldehyde-3-phosphate dehydrogenase (338 aa).

5 residues coordinate NAD(+): Arg13, Ile14, Asp35, Arg80, and Ser123. D-glyceraldehyde 3-phosphate contacts are provided by Ser152, Cys153, Thr154, Thr183, Arg198, Thr212, Gly213, and Arg235. Cys153 functions as the Nucleophile in the catalytic mechanism. Asn317 contributes to the NAD(+) binding site.

Belongs to the glyceraldehyde-3-phosphate dehydrogenase family. In terms of assembly, homotetramer.

The protein resides in the tegument membrane. It catalyses the reaction D-glyceraldehyde 3-phosphate + phosphate + NAD(+) = (2R)-3-phospho-glyceroyl phosphate + NADH + H(+). It functions in the pathway carbohydrate degradation; glycolysis; pyruvate from D-glyceraldehyde 3-phosphate: step 1/5. Its function is as follows. This antigen is associated with human resistance to schistosomiasis. The sequence is that of Glyceraldehyde-3-phosphate dehydrogenase from Schistosoma mansoni (Blood fluke).